The following is a 390-amino-acid chain: Nuclear receptor subfamily 2 group F member 6 (390 aa).

Over residues 1-15 the composition is skewed to gly residues; that stretch reads MAMVTGGWGGPGGDT. Residues 1–50 form a disordered region; that stretch reads MAMVTGGWGGPGGDTNGVDKAGGSYPRATEDDSASPPGATSDAEPGDEER. Phosphoserine occurs at positions 35 and 41. A DNA-binding region (nuclear receptor) is located at residues 54 to 129; the sequence is QVDCVVCGDK…VGMRKEAVQP (76 aa). 2 consecutive NR C4-type zinc fingers follow at residues 57-77 and 93-117; these read CVVC…CEGC and CRSN…LKKC. Residues 157 to 380 form the NR LBD domain; the sequence is PVSELIAQLL…TLIRDMLLSG (224 aa). The important for dimerization stretch occupies residues 314–390; that stretch reads LQEKAQVALT…STFNWPYGSG (77 aa).

This sequence belongs to the nuclear hormone receptor family. NR2 subfamily. Binds DNA as dimer; homodimer and heterodimer with NR2F2 and probably NR2F1. Interacts with THRB.

It localises to the nucleus. In terms of biological role, transcription factor predominantly involved in transcriptional repression. Binds to promoter/enhancer response elements that contain the imperfect 5'-AGGTCA-3' direct or inverted repeats with various spacings which are also recognized by other nuclear hormone receptors. Involved in modulation of hormonal responses. Represses transcriptional activity of the lutropin-choriogonadotropic hormone receptor/LHCGR gene, the renin/REN gene and the oxytocin-neurophysin/OXT gene. Represses the triiodothyronine-dependent and -independent transcriptional activity of the thyroid hormone receptor gene in a cell type-specific manner. The corepressing function towards thyroid hormone receptor beta/THRB involves at least in part the inhibition of THRB binding to triiodothyronine response elements (TREs) by NR2F6. Inhibits NFATC transcription factor DNA binding and subsequently its transcriptional activity. Acts as transcriptional repressor of IL-17 expression in Th-17 differentiated CD4(+) T cells and may be involved in induction and/or maintenance of peripheral immunological tolerance and autoimmunity. Involved in development of forebrain circadian clock; is required early in the development of the locus coeruleus (LC). The sequence is that of Nuclear receptor subfamily 2 group F member 6 (Nr2f6) from Rattus norvegicus (Rat).